Consider the following 415-residue polypeptide: ORC1-type DNA replication protein 2 (415 aa).

Residues 69–73 (TGKSV), tyrosine 215, and arginine 227 contribute to the ATP site.

It belongs to the CDC6/cdc18 family.

Functionally, involved in regulation of DNA replication. This chain is ORC1-type DNA replication protein 2 (cdc6-2), found in Sulfolobus acidocaldarius (strain ATCC 33909 / DSM 639 / JCM 8929 / NBRC 15157 / NCIMB 11770).